Consider the following 455-residue polypeptide: Probable glycine dehydrogenase (decarboxylating) subunit 1 (455 aa).

The protein belongs to the GcvP family. N-terminal subunit subfamily. As to quaternary structure, the glycine cleavage system is composed of four proteins: P, T, L and H. In this organism, the P 'protein' is a heterodimer of two subunits.

It catalyses the reaction N(6)-[(R)-lipoyl]-L-lysyl-[glycine-cleavage complex H protein] + glycine + H(+) = N(6)-[(R)-S(8)-aminomethyldihydrolipoyl]-L-lysyl-[glycine-cleavage complex H protein] + CO2. Functionally, the glycine cleavage system catalyzes the degradation of glycine. The P protein binds the alpha-amino group of glycine through its pyridoxal phosphate cofactor; CO(2) is released and the remaining methylamine moiety is then transferred to the lipoamide cofactor of the H protein. The chain is Probable glycine dehydrogenase (decarboxylating) subunit 1 from Saccharolobus solfataricus (strain ATCC 35092 / DSM 1617 / JCM 11322 / P2) (Sulfolobus solfataricus).